The sequence spans 199 residues: Glycerol-3-phosphate acyltransferase (199 aa).

A run of 5 helical transmembrane segments spans residues alanine 3–valine 23, tryptophan 50–valine 70, aspartate 78–leucine 98, leucine 113–leucine 133, and leucine 154–phenylalanine 174.

This sequence belongs to the PlsY family. As to quaternary structure, probably interacts with PlsX.

It localises to the cell inner membrane. The catalysed reaction is an acyl phosphate + sn-glycerol 3-phosphate = a 1-acyl-sn-glycero-3-phosphate + phosphate. It participates in lipid metabolism; phospholipid metabolism. Its function is as follows. Catalyzes the transfer of an acyl group from acyl-phosphate (acyl-PO(4)) to glycerol-3-phosphate (G3P) to form lysophosphatidic acid (LPA). This enzyme utilizes acyl-phosphate as fatty acyl donor, but not acyl-CoA or acyl-ACP. This is Glycerol-3-phosphate acyltransferase from Thermus thermophilus (strain ATCC BAA-163 / DSM 7039 / HB27).